The sequence spans 123 residues: uncharacterized protein (123 aa).

Positions 100–123 (NKQPKTTHHFSTNSSEYKSRKSKH) are disordered.

This is an uncharacterized protein from Acanthamoeba polyphaga mimivirus (APMV).